Here is a 249-residue protein sequence, read N- to C-terminus: Very-long-chain (3R)-3-hydroxyacyl-CoA dehydratase 1 (249 aa).

The interval 1–22 is disordered; it reads MASSEEDGTNGGASEAGEEKEA. Residues 1 to 36 lie on the Cytoplasmic side of the membrane; it reads MASSEEDGTNGGASEAGEEKEAPGRRRRLGLLATVW. Residues 37 to 56 form a helical membrane-spanning segment; the sequence is LTFYNIAMTAGWLVLAIAMV. Residues 57–75 are Lumenal-facing; that stretch reads RFYMEKGTHKGLYKSIQKT. A helical membrane pass occupies residues 76 to 92; sequence LKFFQTFALLEIVHCLI. Over 93-102 the chain is Cytoplasmic; sequence GIVPTSVIVA. Residues 103–120 form a helical membrane-spanning segment; the sequence is GVQVSSRIFMVWLITHSI. The Lumenal segment spans residues 121-126; sequence KPIQNE. A helical membrane pass occupies residues 127 to 141; it reads ESVVLFLVAWTVTEI. Over 142-164 the chain is Cytoplasmic; sequence TRYSFYTFSLLDHLPYFIKWARY. Residues 165-182 traverse the membrane as a helical segment; it reads NFFIILYPVGVVGELLTI. Residues tyrosine 171 and glutamate 178 contribute to the active site. Over 183 to 212 the chain is Lumenal; sequence YAALPYVKKTGMFSIRLPNKYNVSFDYYYF. N-linked (GlcNAc...) asparagine glycosylation is present at asparagine 204. A helical transmembrane segment spans residues 213–230; sequence LLITMASYIPLFPQLYFH. At 231-249 the chain is on the cytoplasmic side; it reads MLRQRRKVLHGEVIVEKDD.

This sequence belongs to the very long-chain fatty acids dehydratase HACD family. In terms of assembly, may interact with enzymes of the ELO family (including ELOVL1); with those enzymes that mediate condensation, the first of the four steps of the reaction cycle responsible for fatty acids elongation, may be part of a larger fatty acids elongase complex. Interacts with TECR. Skeletal muscle.

It is found in the endoplasmic reticulum membrane. It catalyses the reaction a very-long-chain (3R)-3-hydroxyacyl-CoA = a very-long-chain (2E)-enoyl-CoA + H2O. The enzyme catalyses (3R)-hydroxyhexadecanoyl-CoA = (2E)-hexadecenoyl-CoA + H2O. It carries out the reaction (3R)-hydroxyoctadecanoyl-CoA = (2E)-octadecenoyl-CoA + H2O. The catalysed reaction is (3R)-hydroxyeicosanoyl-CoA = (2E)-eicosenoyl-CoA + H2O. It catalyses the reaction (3R)-hydroxydocosanoyl-CoA = (2E)-docosenoyl-CoA + H2O. The enzyme catalyses (3R)-hydroxytetracosanoyl-CoA = (2E)-tetracosenoyl-CoA + H2O. It carries out the reaction (3R)-hydroxyhexacosanoyl-CoA = (2E)-hexacosenoyl-CoA + H2O. It participates in lipid metabolism; fatty acid biosynthesis. In terms of biological role, catalyzes the third of the four reactions of the long-chain fatty acids elongation cycle. This endoplasmic reticulum-bound enzymatic process, allows the addition of two carbons to the chain of long- and very long-chain fatty acids/VLCFAs per cycle. This enzyme catalyzes the dehydration of the 3-hydroxyacyl-CoA intermediate into trans-2,3-enoyl-CoA, within each cycle of fatty acid elongation. Thereby, it participates in the production of VLCFAs of different chain lengths that are involved in multiple biological processes as precursors of membrane lipids and lipid mediators. The polypeptide is Very-long-chain (3R)-3-hydroxyacyl-CoA dehydratase 1 (HACD1) (Canis lupus familiaris (Dog)).